The chain runs to 101 residues: UPF0235 protein SG2030 (101 aa).

Belongs to the UPF0235 family.

The protein is UPF0235 protein SG2030 of Sodalis glossinidius (strain morsitans).